The sequence spans 439 residues: Xylose isomerase (439 aa).

Catalysis depends on residues His101 and Asp104. Residues Glu232, Glu268, His271, Asp296, Asp307, Asp309, and Asp339 each coordinate Mg(2+).

This sequence belongs to the xylose isomerase family. In terms of assembly, homotetramer. The cofactor is Mg(2+).

It is found in the cytoplasm. The catalysed reaction is alpha-D-xylose = alpha-D-xylulofuranose. The protein is Xylose isomerase of Haemophilus influenzae (strain PittEE).